A 139-amino-acid polypeptide reads, in one-letter code: Natriuretic peptide Mf-NP (139 aa).

Positions 1–25 are cleaved as a signal peptide; the sequence is MVGLSRLTGGGLLLVLALLPLALDG. Positions 26 to 75 are excised as a propeptide; it reads KPLEEAPTAPSRIIPFSRPVRKESQAVLDPMVHPERPAGSGDDGDLSRLE. Cys-86 and Cys-102 are disulfide-bonded. A propeptide spanning residues 117–139 is cleaved from the precursor; it reads IIPFSRPVRKESRAALDRMQHPG.

This sequence belongs to the natriuretic peptide family. In terms of tissue distribution, expressed by the venom gland.

The protein localises to the secreted. Functionally, natriuretic peptide that dose-dependently induces the rapid relaxation of rat aortic strips phenylephrine-precontracted. Acts by stimulating cGMP production in a dose-dependent manner (by probably activating NPR1 and/or NPR2). May also show potent hypotensive effects. The protein is Natriuretic peptide Mf-NP of Micrurus fulvius (Eastern coral snake).